The sequence spans 132 residues: ATP synthase epsilon chain (132 aa).

Belongs to the ATPase epsilon chain family. In terms of assembly, F-type ATPases have 2 components, CF(1) - the catalytic core - and CF(0) - the membrane proton channel. CF(1) has five subunits: alpha(3), beta(3), gamma(1), delta(1), epsilon(1). CF(0) has three main subunits: a, b and c.

The protein resides in the cell membrane. Produces ATP from ADP in the presence of a proton gradient across the membrane. The chain is ATP synthase epsilon chain from Desulfitobacterium hafniense (strain Y51).